Consider the following 558-residue polypeptide: Formate--tetrahydrofolate ligase (558 aa).

66–73 (TPAGEGKT) is an ATP binding site.

This sequence belongs to the formate--tetrahydrofolate ligase family.

It catalyses the reaction (6S)-5,6,7,8-tetrahydrofolate + formate + ATP = (6R)-10-formyltetrahydrofolate + ADP + phosphate. It participates in one-carbon metabolism; tetrahydrofolate interconversion. The protein is Formate--tetrahydrofolate ligase of Neisseria meningitidis serogroup B (strain ATCC BAA-335 / MC58).